A 430-amino-acid polypeptide reads, in one-letter code: Bifunctional protein GlmU (430 aa).

Residues 1-227 form a pyrophosphorylase region; it reads MISKTHTFVI…GEEATGINNR (227 aa). UDP-N-acetyl-alpha-D-glucosamine-binding positions include lysine 25, glutamine 74, 79–80, 104–106, glycine 140, glutamate 154, asparagine 168, and asparagine 225; these read GT and YGD. Aspartate 106 contributes to the Mg(2+) binding site. Asparagine 225 provides a ligand contact to Mg(2+). Positions 228 to 248 are linker; that stretch reads NDLIKAEFYFQENKRKIFTDS. Residues 249–430 are N-acetyltransferase; sequence GVTLVAPETV…REKQVTKRIK (182 aa). Positions 314 and 332 each coordinate UDP-N-acetyl-alpha-D-glucosamine. The Proton acceptor role is filled by histidine 344. Residues tyrosine 347 and asparagine 358 each contribute to the UDP-N-acetyl-alpha-D-glucosamine site. Residues alanine 361, 367 to 368, alanine 404, and arginine 421 each bind acetyl-CoA; that span reads NY.

It in the N-terminal section; belongs to the N-acetylglucosamine-1-phosphate uridyltransferase family. The protein in the C-terminal section; belongs to the transferase hexapeptide repeat family. As to quaternary structure, homotrimer. It depends on Mg(2+) as a cofactor.

The protein resides in the cytoplasm. It catalyses the reaction alpha-D-glucosamine 1-phosphate + acetyl-CoA = N-acetyl-alpha-D-glucosamine 1-phosphate + CoA + H(+). The enzyme catalyses N-acetyl-alpha-D-glucosamine 1-phosphate + UTP + H(+) = UDP-N-acetyl-alpha-D-glucosamine + diphosphate. It participates in nucleotide-sugar biosynthesis; UDP-N-acetyl-alpha-D-glucosamine biosynthesis; N-acetyl-alpha-D-glucosamine 1-phosphate from alpha-D-glucosamine 6-phosphate (route II): step 2/2. The protein operates within nucleotide-sugar biosynthesis; UDP-N-acetyl-alpha-D-glucosamine biosynthesis; UDP-N-acetyl-alpha-D-glucosamine from N-acetyl-alpha-D-glucosamine 1-phosphate: step 1/1. Its pathway is bacterial outer membrane biogenesis; LPS lipid A biosynthesis. Catalyzes the last two sequential reactions in the de novo biosynthetic pathway for UDP-N-acetylglucosamine (UDP-GlcNAc). The C-terminal domain catalyzes the transfer of acetyl group from acetyl coenzyme A to glucosamine-1-phosphate (GlcN-1-P) to produce N-acetylglucosamine-1-phosphate (GlcNAc-1-P), which is converted into UDP-GlcNAc by the transfer of uridine 5-monophosphate (from uridine 5-triphosphate), a reaction catalyzed by the N-terminal domain. The chain is Bifunctional protein GlmU from Wolbachia pipientis wMel.